A 447-amino-acid polypeptide reads, in one-letter code: Tryptophan 5-hydroxylase 1 (447 aa).

Residues 22 to 97 (TLIFSLENEV…TVLSVDSPDQ (76 aa)) enclose the ACT domain. A Phosphoserine; by PKA modification is found at S61. Residues Y238, R260, and T268 each contribute to the L-tryptophan site. Residues H275, H280, and E320 each coordinate Fe cation. Positions 339 and 369 each coordinate L-tryptophan.

It belongs to the biopterin-dependent aromatic amino acid hydroxylase family. Homotetramer. Interacts with DNAJC12. The cofactor is Fe(2+). Post-translationally, ubiquitinated, leading to its degradation by the proteasome. Ubiquitinated is triggered by phosphorylation. Phosphorylated; triggering degradation by the proteasome.

It carries out the reaction (6R)-L-erythro-5,6,7,8-tetrahydrobiopterin + L-tryptophan + O2 = 5-hydroxy-L-tryptophan + (4aS,6R)-4a-hydroxy-L-erythro-5,6,7,8-tetrahydrobiopterin. It functions in the pathway aromatic compound metabolism; serotonin biosynthesis; serotonin from L-tryptophan: step 1/2. Its function is as follows. Oxidizes L-tryptophan to 5-hydroxy-l-tryptophan in the rate-determining step of serotonin biosynthesis. The polypeptide is Tryptophan 5-hydroxylase 1 (Mus musculus (Mouse)).